The following is a 97-amino-acid chain: Sperm-associated acrosin inhibitor (97 aa).

Residues 1–26 form the signal peptide; it reads MAFFSSRVRALFILVLVLPLCSETGF. The Kazal-like domain occupies 32–90; it reads TRKEPDCDVYRSHLFFCTREMDPICGTNGKSYANPCIFCSEKLGRNEKFDFGHWGHCRE. Disulfide bonds link Cys-38/Cys-70, Cys-48/Cys-67, and Cys-56/Cys-88.

Seminal plasma.

The protein resides in the secreted. Its function is as follows. Inhibits acrosin. This is Sperm-associated acrosin inhibitor from Sus scrofa (Pig).